The following is a 272-amino-acid chain: Indole-3-glycerol phosphate synthase (272 aa).

The protein belongs to the TrpC family.

It catalyses the reaction 1-(2-carboxyphenylamino)-1-deoxy-D-ribulose 5-phosphate + H(+) = (1S,2R)-1-C-(indol-3-yl)glycerol 3-phosphate + CO2 + H2O. The protein operates within amino-acid biosynthesis; L-tryptophan biosynthesis; L-tryptophan from chorismate: step 4/5. The chain is Indole-3-glycerol phosphate synthase from Mycolicibacterium gilvum (strain PYR-GCK) (Mycobacterium gilvum (strain PYR-GCK)).